A 396-amino-acid polypeptide reads, in one-letter code: Phosphoglycerate kinase (396 aa).

Substrate-binding positions include 21-23 (DLN), Arg-36, 59-62 (HFDR), Arg-118, and Arg-151. Residues Lys-201, Glu-323, and 353–356 (GGDT) each bind ATP.

This sequence belongs to the phosphoglycerate kinase family. Monomer.

Its subcellular location is the cytoplasm. It carries out the reaction (2R)-3-phosphoglycerate + ATP = (2R)-3-phospho-glyceroyl phosphate + ADP. It participates in carbohydrate degradation; glycolysis; pyruvate from D-glyceraldehyde 3-phosphate: step 2/5. The sequence is that of Phosphoglycerate kinase from Granulibacter bethesdensis (strain ATCC BAA-1260 / CGDNIH1).